The primary structure comprises 503 residues: Potassium voltage-gated channel subfamily V member 1 (503 aa).

2 disordered regions span residues 1–20 (MDLSPRNRPLLDSSSLDSGS) and 171–192 (KKDTDDQESQHESEQDFSKGPC). The Cytoplasmic portion of the chain corresponds to 3-213 (LSPRNRPLLD…EKPGSSTAAR (211 aa)). Residues 10-20 (LLDSSSLDSGS) show a composition bias toward low complexity. The segment covering 171 to 187 (KKDTDDQESQHESEQDF) has biased composition (basic and acidic residues). A helical transmembrane segment spans residues 214–234 (IFGVISIIFVAVSIVNMALMS). Over 235-241 (AELSWLN) the chain is Extracellular. A helical membrane pass occupies residues 242–262 (LQLLEILEYVCISWFTGEFVL). Topologically, residues 263–279 (RFLCVKDRCHFLRKVPN) are cytoplasmic. Residues 280–300 (IIDLLAILPFYITLLVESLSG) form a helical membrane-spanning segment. Residues 301-312 (SHTTQELENVGR) are Extracellular-facing. Residues 313–334 (LVQVLRLLRALRMLKLGRHSTG) form a helical; Voltage-sensor membrane-spanning segment. The Cytoplasmic segment spans residues 335 to 348 (LRSLGMTITQCYEE). The helical transmembrane segment at 349 to 369 (VGLLLLFLSVGISIFSTIEYF) threads the bilayer. The short motif at 395-400 (TVGYGD) is the Selectivity filter element. A helical membrane pass occupies residues 410 to 430 (IVAFMCILSGILVLALPIAII). Residues 431–503 (NDRFSACYFT…RSSGGDDFWF (73 aa)) lie on the Cytoplasmic side of the membrane.

It belongs to the potassium channel family. V (TC 1.A.1.2) subfamily. Kv8.1/KCNV1 sub-subfamily. In terms of assembly, heteromultimer with KCNB1 and KCNB2. Interacts with KCNC4 and KCND1.

The protein localises to the cell membrane. Its function is as follows. Potassium channel subunit that does not form functional channels by itself. Modulates KCNB1 and KCNB2 channel activity by shifting the threshold for inactivation to more negative values and by slowing the rate of inactivation. Can down-regulate the channel activity of KCNB1, KCNB2, KCNC4 and KCND1, possibly by trapping them in intracellular membranes. This Mus musculus (Mouse) protein is Potassium voltage-gated channel subfamily V member 1 (Kcnv1).